The sequence spans 489 residues: MSVYGLQRLYIGGAYVDATSGKTFDTFDPATGELLAQVQQASAADVDRAVASAQQGQREWAALTAMQRSRILRRAVDLLRERNDELAAIETRDTGKPIGETLAVDIVTGADVIEYYAGLATAIEGLQVPLRAESFVYTRREPLGVCAGIGAWNYPIQIACWKTAPALAAGNAMVFKPSEVTPLTALKLAEIYTEAGVPAGVFNVVQGDGSVGALLTGHPDIAKVSFTGGVETGKKVMSLAGASSLKEVTMELGGKSPLIVFDDADLDRAADIAVIANFFSSGQVCTNGTRVFVQRSIKDAFTAKVLERVKRIRVGKPTDADTNFGPLVSAAQLDKVLGFIASGKAEGAKLLAGGTRLTDGHFADGQYVAPTVFGDCRDDMKIVREEIFGPVMSILDFESEDEVIARANDTHYGLAAGVVTENLSRAHRTIHRLEAGICWINTWGESPAEMPVGGYKQSGVGRENGITTLEHYTRIKSVQVELGRYNPVF.

Positions 26 and 93 each coordinate K(+). 150–152 (GAW) serves as a coordination point for NAD(+). The active-site Charge relay system is the lysine 162. An NAD(+)-binding site is contributed by 176–179 (KPSE). Valine 180 is a K(+) binding site. 229–232 (GVET) serves as a coordination point for NAD(+). Leucine 245 is a binding site for K(+). The active-site Proton acceptor is glutamate 251. Positions 253, 285, and 386 each coordinate NAD(+). Cysteine 285 functions as the Nucleophile in the catalytic mechanism. Cysteine sulfenic acid (-SOH) is present on cysteine 285. Residues lysine 456 and glycine 459 each contribute to the K(+) site. Glutamate 463 functions as the Charge relay system in the catalytic mechanism.

It belongs to the aldehyde dehydrogenase family. As to quaternary structure, dimer of dimers. It depends on K(+) as a cofactor.

It carries out the reaction betaine aldehyde + NAD(+) + H2O = glycine betaine + NADH + 2 H(+). It functions in the pathway amine and polyamine biosynthesis; betaine biosynthesis via choline pathway; betaine from betaine aldehyde: step 1/1. Its function is as follows. Involved in the biosynthesis of the osmoprotectant glycine betaine. Catalyzes the irreversible oxidation of betaine aldehyde to the corresponding acid. This is Betaine aldehyde dehydrogenase from Burkholderia vietnamiensis (strain G4 / LMG 22486) (Burkholderia cepacia (strain R1808)).